The chain runs to 295 residues: Ribosomal RNA small subunit methyltransferase A (295 aa).

The S-adenosyl-L-methionine site is built by Asn31, Leu33, Gly58, Glu79, Asp104, and Asn129.

The protein belongs to the class I-like SAM-binding methyltransferase superfamily. rRNA adenine N(6)-methyltransferase family. RsmA subfamily.

It localises to the cytoplasm. It carries out the reaction adenosine(1518)/adenosine(1519) in 16S rRNA + 4 S-adenosyl-L-methionine = N(6)-dimethyladenosine(1518)/N(6)-dimethyladenosine(1519) in 16S rRNA + 4 S-adenosyl-L-homocysteine + 4 H(+). Specifically dimethylates two adjacent adenosines (A1518 and A1519) in the loop of a conserved hairpin near the 3'-end of 16S rRNA in the 30S particle. May play a critical role in biogenesis of 30S subunits. In Leuconostoc citreum (strain KM20), this protein is Ribosomal RNA small subunit methyltransferase A.